An 86-amino-acid polypeptide reads, in one-letter code: Large ribosomal subunit protein uL23 (86 aa).

It belongs to the universal ribosomal protein uL23 family. Part of the 50S ribosomal subunit. Contacts protein L29.

Functionally, binds to 23S rRNA. One of the proteins that surrounds the polypeptide exit tunnel on the outside of the ribosome. The sequence is that of Large ribosomal subunit protein uL23 from Methanococcus vannielii (strain ATCC 35089 / DSM 1224 / JCM 13029 / OCM 148 / SB).